We begin with the raw amino-acid sequence, 429 residues long: Adenylosuccinate synthetase (429 aa).

Residues 12–18 (GDEGKGK) and 40–42 (GHT) contribute to the GTP site. D13 serves as the catalytic Proton acceptor. Mg(2+) is bound by residues D13 and G40. Residues 13 to 16 (DEGK), 38 to 41 (NAGH), T129, R143, Q223, T238, and R302 contribute to the IMP site. The active-site Proton donor is the H41. 298 to 304 (VVTGRKR) contacts substrate. Residues R304, 330-332 (KLD), and 412-414 (STS) each bind GTP.

It belongs to the adenylosuccinate synthetase family. As to quaternary structure, homodimer. Mg(2+) is required as a cofactor.

Its subcellular location is the cytoplasm. It carries out the reaction IMP + L-aspartate + GTP = N(6)-(1,2-dicarboxyethyl)-AMP + GDP + phosphate + 2 H(+). It functions in the pathway purine metabolism; AMP biosynthesis via de novo pathway; AMP from IMP: step 1/2. Functionally, plays an important role in the de novo pathway of purine nucleotide biosynthesis. Catalyzes the first committed step in the biosynthesis of AMP from IMP. The sequence is that of Adenylosuccinate synthetase from Brucella ovis (strain ATCC 25840 / 63/290 / NCTC 10512).